Consider the following 488-residue polypeptide: 3-octaprenyl-4-hydroxybenzoate carboxy-lyase (488 aa).

Asn-172 contributes to the Mn(2+) binding site. Prenylated FMN is bound by residues 175 to 177 (IYR), 189 to 191 (RWL), and 194 to 195 (RG). Residue Glu-238 coordinates Mn(2+). The active-site Proton donor is the Asp-287.

It belongs to the UbiD family. As to quaternary structure, homohexamer. Prenylated FMN serves as cofactor. Requires Mn(2+) as cofactor.

Its subcellular location is the cell membrane. The enzyme catalyses a 4-hydroxy-3-(all-trans-polyprenyl)benzoate + H(+) = a 2-(all-trans-polyprenyl)phenol + CO2. The protein operates within cofactor biosynthesis; ubiquinone biosynthesis. In terms of biological role, catalyzes the decarboxylation of 3-octaprenyl-4-hydroxy benzoate to 2-octaprenylphenol, an intermediate step in ubiquinone biosynthesis. This chain is 3-octaprenyl-4-hydroxybenzoate carboxy-lyase, found in Ectopseudomonas mendocina (strain ymp) (Pseudomonas mendocina).